We begin with the raw amino-acid sequence, 84 residues long: Glutaredoxin (84 aa).

The region spanning 1–84 is the Glutaredoxin domain; it reads MPPVVIYTTA…AGKLDALLSA (84 aa). Cysteines 12 and 15 form a disulfide.

The protein belongs to the glutaredoxin family. In terms of assembly, monomer.

Its subcellular location is the cytoplasm. Its function is as follows. Has a glutathione-disulfide oxidoreductase activity in the presence of NADPH and glutathione reductase. Reduces low molecular weight disulfides and proteins. This Pseudomonas aeruginosa (strain ATCC 15692 / DSM 22644 / CIP 104116 / JCM 14847 / LMG 12228 / 1C / PRS 101 / PAO1) protein is Glutaredoxin (grx).